We begin with the raw amino-acid sequence, 539 residues long: Chaperonin GroEL (539 aa).

ATP contacts are provided by residues 30–33, Lys-51, 87–91, Gly-415, 479–481, and Asp-495; these read TLGP, DGTTT, and NAA.

The protein belongs to the chaperonin (HSP60) family. In terms of assembly, forms a cylinder of 14 subunits composed of two heptameric rings stacked back-to-back. Interacts with the co-chaperonin GroES.

It localises to the cytoplasm. The catalysed reaction is ATP + H2O + a folded polypeptide = ADP + phosphate + an unfolded polypeptide.. In terms of biological role, together with its co-chaperonin GroES, plays an essential role in assisting protein folding. The GroEL-GroES system forms a nano-cage that allows encapsulation of the non-native substrate proteins and provides a physical environment optimized to promote and accelerate protein folding. This Enterobacter agglomerans (Erwinia herbicola) protein is Chaperonin GroEL.